The chain runs to 636 residues: Chaperone protein HtpG (636 aa).

Positions 1–342 (MSGETLEFQA…AHDLSLNISR (342 aa)) are a; substrate-binding. The tract at residues 343–558 (ELLQQDRQIQ…AHDVTPTLEK (216 aa)) is b. A c region spans residues 559–636 (MYRAMGHEVP…ILAERLARTL (78 aa)).

This sequence belongs to the heat shock protein 90 family. As to quaternary structure, homodimer.

The protein resides in the cytoplasm. In terms of biological role, molecular chaperone. Has ATPase activity. The chain is Chaperone protein HtpG from Salinispora arenicola (strain CNS-205).